The primary structure comprises 327 residues: Methionyl-tRNA formyltransferase (327 aa).

117 to 120 is a (6S)-5,6,7,8-tetrahydrofolate binding site; the sequence is SLLP.

Belongs to the Fmt family.

The catalysed reaction is L-methionyl-tRNA(fMet) + (6R)-10-formyltetrahydrofolate = N-formyl-L-methionyl-tRNA(fMet) + (6S)-5,6,7,8-tetrahydrofolate + H(+). Its function is as follows. Attaches a formyl group to the free amino group of methionyl-tRNA(fMet). The formyl group appears to play a dual role in the initiator identity of N-formylmethionyl-tRNA by promoting its recognition by IF2 and preventing the misappropriation of this tRNA by the elongation apparatus. The chain is Methionyl-tRNA formyltransferase from Delftia acidovorans (strain DSM 14801 / SPH-1).